A 244-amino-acid polypeptide reads, in one-letter code: Ethylene-responsive transcription factor ERF013 (244 aa).

The interval 1–33 (MVKQELKIQVTTSSSSLSHSSSSSSSSTSALRH) is disordered. Low complexity predominate over residues 11-29 (TTSSSSLSHSSSSSSSSTS). Positions 42–99 (KYKGVRMRSWGSWVTEIRAPNQKTRIWLGSYSTAEAAARAYDAALLCLKGPKANLNFP) form a DNA-binding region, AP2/ERF. Residues 123-178 (QKVAAQAANSSSDHFTPPSDENDHDHDDGLDHHPSASSSAASSPPDDDHHNDDDGD) are disordered. Over residues 143 to 156 (ENDHDHDDGLDHHP) the composition is skewed to basic and acidic residues. A compositionally biased stretch (low complexity) spans 157–166 (SASSSAASSP).

The protein belongs to the AP2/ERF transcription factor family. ERF subfamily.

The protein resides in the nucleus. In terms of biological role, probably acts as a transcriptional activator. Binds to the GCC-box pathogenesis-related promoter element. May be involved in the regulation of gene expression by stress factors and by components of stress signal transduction pathways. The sequence is that of Ethylene-responsive transcription factor ERF013 (ERF013) from Arabidopsis thaliana (Mouse-ear cress).